We begin with the raw amino-acid sequence, 471 residues long: Adenosylhomocysteinase (471 aa).

Residues Thr-60, Asp-135, and Glu-196 each coordinate substrate. Residue 197–199 coordinates NAD(+); sequence TTT. Residues Lys-226 and Asp-230 each contribute to the substrate site. NAD(+) contacts are provided by residues Asn-231, 260–265, Glu-283, Asn-318, 339–341, and Asn-387; these read GYGDVG and IGH.

The protein belongs to the adenosylhomocysteinase family. NAD(+) serves as cofactor.

Its subcellular location is the cytoplasm. The catalysed reaction is S-adenosyl-L-homocysteine + H2O = L-homocysteine + adenosine. It functions in the pathway amino-acid biosynthesis; L-homocysteine biosynthesis; L-homocysteine from S-adenosyl-L-homocysteine: step 1/1. Its function is as follows. May play a key role in the regulation of the intracellular concentration of adenosylhomocysteine. In Chlorobaculum tepidum (strain ATCC 49652 / DSM 12025 / NBRC 103806 / TLS) (Chlorobium tepidum), this protein is Adenosylhomocysteinase.